An 847-amino-acid chain; its full sequence is UPF0182 protein CYB_0372 (847 aa).

Helical transmembrane passes span 7–27 (GLFL…LAAF), 51–71 (WGLG…NICS), 76–96 (ATLA…AGSL), 141–161 (FNLV…ELGL), 168–188 (LALS…LFLI), 220–240 (LPAT…FWAL), and 259–279 (WASS…FGLL).

Belongs to the UPF0182 family.

The protein resides in the cell membrane. The polypeptide is UPF0182 protein CYB_0372 (Synechococcus sp. (strain JA-2-3B'a(2-13)) (Cyanobacteria bacterium Yellowstone B-Prime)).